Consider the following 934-residue polypeptide: Bifunctional uridylyltransferase/uridylyl-removing enzyme (934 aa).

A uridylyltransferase region spans residues 1–379 (MSAHDLKLEE…TFSRRKRKLS (379 aa)). Residues 380-736 (DDGAFISENH…AKPHAFEAVT (357 aa)) form a uridylyl-removing region. An HD domain is found at 496–613 (VDEHLLRCIA…IDFADTVQTM (118 aa)). ACT domains lie at 737–818 (EITV…DMLA) and 848–931 (VIEV…RSPQ).

Belongs to the GlnD family. It depends on Mg(2+) as a cofactor.

The enzyme catalyses [protein-PII]-L-tyrosine + UTP = [protein-PII]-uridylyl-L-tyrosine + diphosphate. It catalyses the reaction [protein-PII]-uridylyl-L-tyrosine + H2O = [protein-PII]-L-tyrosine + UMP + H(+). Uridylyltransferase (UTase) activity is inhibited by glutamine, while glutamine activates uridylyl-removing (UR) activity. Its function is as follows. Modifies, by uridylylation and deuridylylation, the PII regulatory proteins (GlnB and homologs), in response to the nitrogen status of the cell that GlnD senses through the glutamine level. Under low glutamine levels, catalyzes the conversion of the PII proteins and UTP to PII-UMP and PPi, while under higher glutamine levels, GlnD hydrolyzes PII-UMP to PII and UMP (deuridylylation). Thus, controls uridylylation state and activity of the PII proteins, and plays an important role in the regulation of nitrogen assimilation and metabolism. The sequence is that of Bifunctional uridylyltransferase/uridylyl-removing enzyme from Brucella suis biovar 1 (strain 1330).